We begin with the raw amino-acid sequence, 284 residues long: UDP-N-acetylenolpyruvoylglucosamine reductase (284 aa).

Residues 12–174 (KIGGRVKYLV…TRVMMSFKRE (163 aa)) form the FAD-binding PCMH-type domain. Arg153 is an active-site residue. Ser203 acts as the Proton donor in catalysis. Residue Glu274 is part of the active site.

Belongs to the MurB family. FAD serves as cofactor.

It localises to the cytoplasm. The catalysed reaction is UDP-N-acetyl-alpha-D-muramate + NADP(+) = UDP-N-acetyl-3-O-(1-carboxyvinyl)-alpha-D-glucosamine + NADPH + H(+). It participates in cell wall biogenesis; peptidoglycan biosynthesis. Its function is as follows. Cell wall formation. This is UDP-N-acetylenolpyruvoylglucosamine reductase from Thermotoga petrophila (strain ATCC BAA-488 / DSM 13995 / JCM 10881 / RKU-1).